Consider the following 660-residue polypeptide: Putative ATP-dependent RNA helicase Pl10 (660 aa).

The segment covering 1–11 (MSHVAEEDELG) has biased composition (acidic residues). The segment at 1-117 (MSHVAEEDEL…SRGGRSGFGK (117 aa)) is disordered. Position 2 is an N-acetylserine (Ser2). Residues 12-21 (LDQQLAGLDL) are compositionally biased toward low complexity. Polar residues predominate over residues 24 to 34 (RDSQSGGSTAS). Over residues 44-66 (RNREAAKAFYDKDGSRWSKDKDA) the composition is skewed to basic and acidic residues. An N6-acetyllysine modification is found at Lys55. Phosphoserine is present on residues Ser80, Ser84, and Ser89. Basic and acidic residues predominate over residues 93–103 (GRFDERGRSDY). Position 100 is an omega-N-methylarginine (Arg100). Ser101 is subject to Phosphoserine. Phosphotyrosine is present on Tyr103. Arg109 is modified (omega-N-methylarginine). At Lys117 the chain carries N6-acetyllysine. The short motif at 179-207 (ESFSDVEMGEIIMGNIELTRYTRPTPVQK) is the Q motif element. The residue at position 182 (Ser182) is a Phosphoserine. 199-206 (YTRPTPVQ) is an ATP binding site. The region spanning 210–402 (IPIIKEKRDL…RDFLDEYIFL (193 aa)) is the Helicase ATP-binding domain. Lys214 is covalently cross-linked (Glycyl lysine isopeptide (Lys-Gly) (interchain with G-Cter in SUMO2)). 223-230 (AQTGSGKT) contributes to the ATP binding site. The short motif at 346–349 (DEAD) is the DEAD box element. A Helicase C-terminal domain is found at 413 to 574 (NITQKVVWVE…EVPSWLENMA (162 aa)). Ser455 carries the post-translational modification Phosphoserine. Arg590 is subject to Omega-N-methylarginine. Phosphoserine occurs at positions 592, 603, and 610. The disordered stretch occupies residues 598–632 (RDYRQSSGASSSSFSSGRASNSRSGGGSHGSSRGF). The segment covering 602 to 620 (QSSGASSSSFSSGRASNSR) has biased composition (low complexity). Residues Arg615 and Arg630 each carry the omega-N-methylarginine modification. The span at 621 to 632 (SGGGSHGSSRGF) shows a compositional bias: gly residues.

It belongs to the DEAD box helicase family. DDX3/DED1 subfamily. In terms of tissue distribution, testis.

The catalysed reaction is ATP + H2O = ADP + phosphate + H(+). Putative ATP-dependent RNA helicase. Possible role in a key step of the spermatogenic process. This Mus musculus (Mouse) protein is Putative ATP-dependent RNA helicase Pl10 (D1Pas1).